A 298-amino-acid chain; its full sequence is uncharacterized protein (298 aa).

One can recognise an ABC transporter domain in the interval Leu2 to Ser229. Gly34–Thr41 serves as a coordination point for ATP.

This sequence belongs to the ABC transporter superfamily.

The protein resides in the cell membrane. This is an uncharacterized protein from Bacillus subtilis (strain 168).